A 230-amino-acid chain; its full sequence is DNA repair protein RecO (230 aa).

This sequence belongs to the RecO family.

Its function is as follows. Involved in DNA repair and RecF pathway recombination. The polypeptide is DNA repair protein RecO (Pseudoalteromonas translucida (strain TAC 125)).